Reading from the N-terminus, the 293-residue chain is Ribosomal protein L11 methyltransferase (293 aa).

Residues threonine 145, glycine 166, aspartate 188, and asparagine 230 each contribute to the S-adenosyl-L-methionine site.

It belongs to the methyltransferase superfamily. PrmA family.

It is found in the cytoplasm. It catalyses the reaction L-lysyl-[protein] + 3 S-adenosyl-L-methionine = N(6),N(6),N(6)-trimethyl-L-lysyl-[protein] + 3 S-adenosyl-L-homocysteine + 3 H(+). In terms of biological role, methylates ribosomal protein L11. The chain is Ribosomal protein L11 methyltransferase from Shewanella woodyi (strain ATCC 51908 / MS32).